Reading from the N-terminus, the 301-residue chain is 2-methylisocitrate lyase (301 aa).

53–55 (SGA) is a substrate binding site. 2 residues coordinate Mg(2+): Asp-92 and Asp-94. Substrate-binding positions include 129-130 (CG), Arg-162, Glu-192, 214-216 (NMT), Arg-245, and Arg-274.

It belongs to the isocitrate lyase/PEP mutase superfamily. Methylisocitrate lyase family. The cofactor is Mg(2+).

The catalysed reaction is 3-hydroxybutane-1,2,3-tricarboxylate = pyruvate + succinate. Involved in the methylcitric acid cycle. Catalyzes the cleavage of 2-methylisocitrate to yield pyruvate and succinate. This chain is 2-methylisocitrate lyase, found in Bacillus subtilis (strain 168).